A 471-amino-acid polypeptide reads, in one-letter code: Collagenase 3 (471 aa).

An N-terminal signal peptide occupies residues 1–19 (MQPGVLAACLLLSWTHCWS). Residues 20–103 (LPLLNSNEDD…PRCGVPDVGE (84 aa)) constitute a propeptide, activation peptide. Residues 94 to 101 (PRCGVPDV) carry the Cysteine switch motif. Position 96 (Cys-96) interacts with Zn(2+). Residue Asn-117 is glycosylated (N-linked (GlcNAc...) asparagine). Residue Asp-128 coordinates Ca(2+). 2 N-linked (GlcNAc...) asparagine glycosylation sites follow: Asn-152 and Asn-158. Residue Asp-162 participates in Ca(2+) binding. Zn(2+) contacts are provided by His-172 and Asp-174. The interaction with TIMP2 stretch occupies residues 176 to 246 (YPFDGPSGLL…GALMFPIYTY (71 aa)). Ca(2+) is bound by residues Asp-179, Gly-180, Ser-182, and Leu-184. A Zn(2+)-binding site is contributed by His-187. Residues Asn-194, Gly-196, and Asp-198 each coordinate Ca(2+). Residue His-200 coordinates Zn(2+). Ca(2+) is bound by residues Asp-202, Asp-203, and Glu-205. His-222 is a binding site for Zn(2+). Residue Glu-223 is part of the active site. Residues His-226, His-232, and Met-240 each coordinate Zn(2+). The tract at residues 263 to 284 (QSLYGPGDEDPNPKHPKTPDKC) is disordered. The segment at 268-471 (PGDEDPNPKH…VMPTNSLLWC (204 aa)) is interaction with collagen. Positions 273 to 284 (PNPKHPKTPDKC) are enriched in basic and acidic residues. 4 Hemopexin repeats span residues 281–330 (PDKC…WPEL), 331–377 (PNRI…GFPR), 379–427 (VKKI…FPGI), and 428–471 (GGKV…LLWC). A disulfide bridge links Cys-284 with Cys-471. Ca(2+)-binding residues include Asp-291, Ile-293, Asp-335, and Ala-337. Phosphotyrosine; by PKDCC is present on Tyr-366. Residues Ser-383 and Ala-385 each contribute to the Ca(2+) site. Residue Asn-409 is glycosylated (N-linked (GlcNAc...) asparagine). Ca(2+) contacts are provided by Asp-432 and Val-434.

Belongs to the peptidase M10A family. Ca(2+) is required as a cofactor. Zn(2+) serves as cofactor. In terms of processing, the proenzyme is activated by removal of the propeptide; this cleavage can be effected by other matrix metalloproteinases, such as MMP2, MMP3 and MMP14 and may involve several cleavage steps. Cleavage can also be autocatalytic, after partial maturation by another protease or after treatment with 4-aminophenylmercuric acetate (APMA) (in vitro). Post-translationally, N-glycosylated. Tyrosine phosphorylated by PKDCC/VLK.

The protein resides in the secreted. Its subcellular location is the extracellular space. It is found in the extracellular matrix. Plays a role in the degradation of extracellular matrix proteins including fibrillar collagen, fibronectin, TNC and ACAN. Cleaves triple helical collagens, including type I, type II and type III collagen, but has the highest activity with soluble type II collagen. Can also degrade collagen type IV, type XIV and type X. May also function by activating or degrading key regulatory proteins, such as TGFB1 and CCN2. Plays a role in wound healing, tissue remodeling, cartilage degradation, bone development, bone mineralization and ossification. Required for normal embryonic bone development and ossification. Plays a role in the healing of bone fractures via endochondral ossification. Plays a role in wound healing, probably by a mechanism that involves proteolytic activation of TGFB1 and degradation of CCN2. Plays a role in keratinocyte migration during wound healing. May play a role in cell migration and in tumor cell invasion. This Oryctolagus cuniculus (Rabbit) protein is Collagenase 3 (MMP13).